The primary structure comprises 114 residues: U10-agatoxin-Ao1a (114 aa).

The signal sequence occupies residues 1-15; the sequence is MCVATCLCTFAYVLA. Residues 16-32 constitute a propeptide that is removed on maturation; sequence KSDEGENLISKVEETQR. 5 cysteine pairs are disulfide-bonded: C34–C53, C41–C59, C50–C86, C52–C76, and C61–C74. Residues 95–114 form a disordered region; the sequence is GSQNPSLCKDPNPRRRRHGK.

Belongs to the neurotoxin 04 (omega-agtx) family. 03 (type II/III omega-agtx) subfamily. As to expression, expressed by the venom gland.

It localises to the secreted. Inhibits voltage-gated calcium channels (Cav). This Agelena orientalis (Funnel-web spider) protein is U10-agatoxin-Ao1a.